The sequence spans 176 residues: Disulfide bond formation protein B (176 aa).

Residues 1 to 14 are Cytoplasmic-facing; sequence MLQFLNRCSRGRGA. A helical transmembrane segment spans residues 15–31; it reads WLLMALTAFLLELTALY. Topologically, residues 32-49 are periplasmic; it reads FQHIMLLQPCVMCIYERV. A disulfide bond links C41 and C44. A helical transmembrane segment spans residues 50 to 65; that stretch reads ALFGILGASLLGAIAP. Over 66–71 the chain is Cytoplasmic; the sequence is RSPLRY. Residues 72 to 89 traverse the membrane as a helical segment; the sequence is LAIAVWIYSAWKGVQLAW. Residues 90–144 lie on the Periplasmic side of the membrane; that stretch reads AHTMLQLNPSPFNTCDFFVNFPSWLPLDKWLPAVFAASGDCSERQWQFMSLEMPQ. Cysteines 104 and 130 form a disulfide. A helical transmembrane segment spans residues 145–163; it reads WLVGIFAAYLVIAVLVLIS. The Cytoplasmic segment spans residues 164–176; sequence QFVKPKRRDLFGR.

It belongs to the DsbB family.

It localises to the cell inner membrane. Required for disulfide bond formation in some periplasmic proteins. Acts by oxidizing the DsbA protein. The protein is Disulfide bond formation protein B of Yersinia pestis bv. Antiqua (strain Nepal516).